A 933-amino-acid polypeptide reads, in one-letter code: Thyroid peroxidase (933 aa).

A signal peptide spans 1-18 (MRALAVLSVTLVMACTEA). Residues 19–846 (FFPFISRGKE…TCVDSGRLPR (828 aa)) are Extracellular-facing. An N-linked (GlcNAc...) asparagine glycan is attached at asparagine 129. Cysteine 142 and cysteine 158 are oxidised to a cystine. Heme b is bound at residue aspartate 238. Residue histidine 239 is the Proton acceptor of the active site. Position 240 (aspartate 240) interacts with Ca(2+). Intrachain disulfides connect cysteine 259/cysteine 269 and cysteine 263/cysteine 286. N-linked (GlcNAc...) asparagine glycosylation occurs at asparagine 307. Positions 321, 323, 325, and 327 each coordinate Ca(2+). N-linked (GlcNAc...) asparagine glycosylation occurs at asparagine 342. Glutamate 399 and histidine 494 together coordinate heme b. N-linked (GlcNAc...) asparagine glycosylation is present at asparagine 569. Disulfide bonds link cysteine 598–cysteine 655 and cysteine 696–cysteine 721. The 56-residue stretch at 740-795 (DKCGFPESVENGDFVHCEESGRRVLVYSCRHGYELQGREQLTCTQEGWDFQPPLCK) folds into the Sushi domain. The EGF-like; calcium-binding domain maps to 796-839 (DVNECADGAHPPCHASARCRNTKGGFQCLCADPYELGDDGRTCV). Disulfide bonds link cysteine 800–cysteine 814, cysteine 808–cysteine 823, and cysteine 825–cysteine 838. A helical membrane pass occupies residues 847-871 (VTWISMSLAALLIGGFAGLTSTVIC). Over 872–933 (RWTRTGTKST…RDTHRLPRAL (62 aa)) the chain is Cytoplasmic. The interval 881–933 (TLPISETGGGTPELRCGKHQAVGTSPQRAAAQDSEQESAGMEGRDTHRLPRAL) is disordered. The span at 922–933 (EGRDTHRLPRAL) shows a compositional bias: basic and acidic residues.

This sequence belongs to the peroxidase family. XPO subfamily. In terms of assembly, interacts with DUOX1, DUOX2 and CYBA. The cofactor is Ca(2+). Requires heme b as cofactor. Post-translationally, glycosylated. In terms of processing, heme is covalently bound through a H(2)O(2)-dependent autocatalytic process. Heme insertion is important for the delivery of protein at the cell surface. Cleaved in its N-terminal part.

The protein localises to the membrane. Its subcellular location is the cell surface. The catalysed reaction is 2 iodide + H2O2 + 2 H(+) = diiodine + 2 H2O. The enzyme catalyses [thyroglobulin]-L-tyrosine + iodide + H2O2 + H(+) = [thyroglobulin]-3-iodo-L-tyrosine + 2 H2O. It catalyses the reaction [thyroglobulin]-3-iodo-L-tyrosine + iodide + H2O2 + H(+) = [thyroglobulin]-3,5-diiodo-L-tyrosine + 2 H2O. It carries out the reaction 2 [thyroglobulin]-3,5-diiodo-L-tyrosine + H2O2 = [thyroglobulin]-L-thyroxine + [thyroglobulin]-dehydroalanine + 2 H2O. The catalysed reaction is [thyroglobulin]-3-iodo-L-tyrosine + [thyroglobulin]-3,5-diiodo-L-tyrosine + H2O2 = [thyroglobulin]-3,3',5-triiodo-L-thyronine + [thyroglobulin]-dehydroalanine + 2 H2O. The protein operates within hormone biosynthesis; thyroid hormone biosynthesis. Iodination and coupling of the hormonogenic tyrosines in thyroglobulin to yield the thyroid hormones T(3) and T(4). In Homo sapiens (Human), this protein is Thyroid peroxidase.